A 356-amino-acid chain; its full sequence is Zinc finger CCCH domain-containing protein 49 (356 aa).

C3H1-type zinc fingers lie at residues 120 to 146 (YSGT…HGVF) and 155 to 177 (YRTQ…AHSP). Residues 209 to 235 (ISPVSGSPPMSPRADSESSPMTQSLSR) are disordered. Residues 225–235 (ESSPMTQSLSR) show a composition bias toward polar residues.

The chain is Zinc finger CCCH domain-containing protein 49 from Arabidopsis thaliana (Mouse-ear cress).